We begin with the raw amino-acid sequence, 158 residues long: DNA-binding transcriptional repressor RacR (158 aa).

As to quaternary structure, homooctamer.

Transcriptional regulator that represses the expression of ydaS and ydaT under normal physiological conditions. It binds to its own upstream sequence and represses the adjacent and divergently coded ydaS-ydaT operon. RacR-mediated down-regulation of ydaS and ydaT may be critical for cell survival. RacR ensures that the prophage DNA is maintained in the genome. When the expression of the racR gene is reduced, the prophage Rac is excised from the genome, possibly to counteract the lethal toxicity of YdaT. The sequence is that of DNA-binding transcriptional repressor RacR (racR) from Escherichia coli (strain K12).